Here is a 224-residue protein sequence, read N- to C-terminus: MADS-box transcription factor 16 (224 aa).

Residues Met-1–Ser-61 enclose the MADS-box domain. The region spanning Tyr-84–Pro-174 is the K-box domain.

As to quaternary structure, may interact with the K-box of MADS4, MADS6 and MADS8. May form a heterodimer with MADS4. In terms of tissue distribution, expressed in lodicules, stamens and carpels.

Its subcellular location is the nucleus. Probable transcription factor involved in the development of floral organs. Required for normal development of lodicules and stamens (whorls 2 and 3). May function as a heterodimer with MADS4. The sequence is that of MADS-box transcription factor 16 (MADS16) from Oryza sativa subsp. japonica (Rice).